The chain runs to 197 residues: Peptidyl-tRNA hydrolase (197 aa).

Y23 is a tRNA binding site. H28 (proton acceptor) is an active-site residue. TRNA-binding residues include F73, N75, and N121.

This sequence belongs to the PTH family. Monomer.

The protein resides in the cytoplasm. It catalyses the reaction an N-acyl-L-alpha-aminoacyl-tRNA + H2O = an N-acyl-L-amino acid + a tRNA + H(+). Its function is as follows. Hydrolyzes ribosome-free peptidyl-tRNAs (with 1 or more amino acids incorporated), which drop off the ribosome during protein synthesis, or as a result of ribosome stalling. Catalyzes the release of premature peptidyl moieties from peptidyl-tRNA molecules trapped in stalled 50S ribosomal subunits, and thus maintains levels of free tRNAs and 50S ribosomes. This is Peptidyl-tRNA hydrolase from Frankia casuarinae (strain DSM 45818 / CECT 9043 / HFP020203 / CcI3).